Consider the following 251-residue polypeptide: Large ribosomal subunit protein uL16m (251 aa).

Residues 1–29 constitute a mitochondrion transit peptide; it reads MWRLLARASAPLLRVPLSDSWALLPASAG.

It belongs to the universal ribosomal protein uL16 family. In terms of assembly, component of the mitochondrial large ribosomal subunit (mt-LSU). Mature mammalian 55S mitochondrial ribosomes consist of a small (28S) and a large (39S) subunit. The 28S small subunit contains a 12S ribosomal RNA (12S mt-rRNA) and 30 different proteins. The 39S large subunit contains a 16S rRNA (16S mt-rRNA), a copy of mitochondrial valine transfer RNA (mt-tRNA(Val)), which plays an integral structural role, and 52 different proteins.

Its subcellular location is the mitochondrion. The protein is Large ribosomal subunit protein uL16m (MRPL16) of Homo sapiens (Human).